Consider the following 208-residue polypeptide: Ras-related protein RABH1b (208 aa).

16-23 (GDQSVGKT) contacts GTP. The Effector region signature appears at 38–46 (YQATIGIDF). Residues 64–68 (DTAGQ), 122–125 (NKTD), and 152–153 (SA) each bind GTP. S-geranylgeranyl cysteine attachment occurs at residues Cys-206 and Cys-208. At Cys-208 the chain carries Cysteine methyl ester.

The protein belongs to the small GTPase superfamily. Rab family. Interacts with the C-terminus of GC5, but not with GC3. In terms of tissue distribution, expressed in roots, stems, leaves and flowers.

The protein resides in the golgi apparatus membrane. Its subcellular location is the cytoplasm. The protein localises to the cytosol. In terms of biological role, protein transport. Regulator of membrane traffic from the Golgi apparatus towards the endoplasmic reticulum (ER). Binds GTP and GDP and possesses intrinsic GTPase activity. This chain is Ras-related protein RABH1b (RABH1B), found in Arabidopsis thaliana (Mouse-ear cress).